The sequence spans 235 residues: Small ribosomal subunit protein uS2 (235 aa).

Belongs to the universal ribosomal protein uS2 family.

The protein is Small ribosomal subunit protein uS2 of Thermoanaerobacter pseudethanolicus (strain ATCC 33223 / 39E) (Clostridium thermohydrosulfuricum).